The chain runs to 356 residues: Ferredoxin--NADP reductase (356 aa).

The FAD site is built by Thr-25, Glu-44, Gln-52, Tyr-57, Val-97, Phe-132, Asp-298, and Ser-339.

It belongs to the ferredoxin--NADP reductase type 2 family. In terms of assembly, homodimer. It depends on FAD as a cofactor.

It carries out the reaction 2 reduced [2Fe-2S]-[ferredoxin] + NADP(+) + H(+) = 2 oxidized [2Fe-2S]-[ferredoxin] + NADPH. This is Ferredoxin--NADP reductase from Chlorobaculum parvum (strain DSM 263 / NCIMB 8327) (Chlorobium vibrioforme subsp. thiosulfatophilum).